A 204-amino-acid polypeptide reads, in one-letter code: NAD(P)H dehydrogenase (quinone) (204 aa).

Positions 4–195 constitute a Flavodoxin-like domain; the sequence is IQIVFYSMYG…AIARFQGAHV (192 aa). Residues 10 to 15 and 83 to 85 contribute to the FMN site; these read SMYGHI and TRF. Tyr-12 is a binding site for NAD(+). Trp-103 provides a ligand contact to substrate. Residues 118 to 124 and His-139 contribute to the FMN site; that span reads STATQHG.

Belongs to the WrbA family. The cofactor is FMN.

It catalyses the reaction a quinone + NADH + H(+) = a quinol + NAD(+). It carries out the reaction a quinone + NADPH + H(+) = a quinol + NADP(+). This is NAD(P)H dehydrogenase (quinone) from Trichlorobacter lovleyi (strain ATCC BAA-1151 / DSM 17278 / SZ) (Geobacter lovleyi).